Reading from the N-terminus, the 356-residue chain is Septin-2A (356 aa).

In terms of domain architecture, Septin-type G spans 33-305; it reads KGFEFTLMVV…ENFRSERLKK (273 aa). The interval 43 to 50 is G1 motif; it reads GESGLGKS. GTP-binding positions include 43–50, T77, G103, 182–190, G240, and R255; these read GESGLGKS and KADTLTLRE. Positions 100-103 are G3 motif; it reads DTPG. The interval 181–184 is G4 motif; that stretch reads AKAD. Positions 259-269 are important for dimerization; sequence WGVVEVENTEH.

This sequence belongs to the TRAFAC class TrmE-Era-EngA-EngB-Septin-like GTPase superfamily. Septin GTPase family. In terms of assembly, septins polymerize into heterooligomeric protein complexes that form filaments, and associate with cellular membranes, actin filaments and microtubules. GTPase activity is required for filament formation. Can form heterooligomers with other family members and form filaments. Interacts with wdpcp.

It localises to the cytoplasm. It is found in the cytoskeleton. The protein resides in the spindle. The protein localises to the cleavage furrow. Its subcellular location is the midbody. It localises to the cell projection. It is found in the cilium membrane. In terms of biological role, filament-forming cytoskeletal GTPase. Required for normal organization of the actin cytoskeleton. Plays a role in the biogenesis of polarized columnar-shaped epithelium. Required for the progression through mitosis through regulation of chromosome congression. During anaphase, may be required for chromosome segregation and spindle elongation. Probably plays a role in ciliogenesis and collective cell movements including convergent extension during gastrulation. In cilia, required for the integrity of the diffusion barrier at the base of the primary cilium that prevents diffusion of transmembrane proteins between the cilia and plasma membranes. Controls cell shape and not polarization of cells during convergent extension. The sequence is that of Septin-2A (sept2-a) from Xenopus laevis (African clawed frog).